The primary structure comprises 288 residues: Elongation factor Ts (288 aa).

Residues 79 to 82 (TDFV) are involved in Mg(2+) ion dislocation from EF-Tu.

Belongs to the EF-Ts family.

It is found in the cytoplasm. Associates with the EF-Tu.GDP complex and induces the exchange of GDP to GTP. It remains bound to the aminoacyl-tRNA.EF-Tu.GTP complex up to the GTP hydrolysis stage on the ribosome. This Ehrlichia chaffeensis (strain ATCC CRL-10679 / Arkansas) protein is Elongation factor Ts.